A 381-amino-acid polypeptide reads, in one-letter code: Dual-specificity RNA methyltransferase RlmN (381 aa).

The active-site Proton acceptor is E96. The 241-residue stretch at 102–342 folds into the Radical SAM core domain; the sequence is TDDRGTLCVS…TRTTRGDDID (241 aa). Residues C109 and C345 are joined by a disulfide bond. Residues C116, C120, and C123 each coordinate [4Fe-4S] cluster. S-adenosyl-L-methionine-binding positions include 170-171, S202, 224-226, and N302; these read GE and SLH. C345 acts as the S-methylcysteine intermediate in catalysis.

This sequence belongs to the radical SAM superfamily. RlmN family. The cofactor is [4Fe-4S] cluster.

Its subcellular location is the cytoplasm. It carries out the reaction adenosine(2503) in 23S rRNA + 2 reduced [2Fe-2S]-[ferredoxin] + 2 S-adenosyl-L-methionine = 2-methyladenosine(2503) in 23S rRNA + 5'-deoxyadenosine + L-methionine + 2 oxidized [2Fe-2S]-[ferredoxin] + S-adenosyl-L-homocysteine. It catalyses the reaction adenosine(37) in tRNA + 2 reduced [2Fe-2S]-[ferredoxin] + 2 S-adenosyl-L-methionine = 2-methyladenosine(37) in tRNA + 5'-deoxyadenosine + L-methionine + 2 oxidized [2Fe-2S]-[ferredoxin] + S-adenosyl-L-homocysteine. Specifically methylates position 2 of adenine 2503 in 23S rRNA and position 2 of adenine 37 in tRNAs. m2A2503 modification seems to play a crucial role in the proofreading step occurring at the peptidyl transferase center and thus would serve to optimize ribosomal fidelity. In Pseudomonas putida (strain GB-1), this protein is Dual-specificity RNA methyltransferase RlmN.